The primary structure comprises 375 residues: Succinyl-diaminopimelate desuccinylase (375 aa).

Position 66 (His66) interacts with Zn(2+). Asp68 is an active-site residue. A Zn(2+)-binding site is contributed by Asp99. The active-site Proton acceptor is Glu133. The Zn(2+) site is built by Glu134, Glu162, and His348.

Belongs to the peptidase M20A family. DapE subfamily. As to quaternary structure, homodimer. The cofactor is Zn(2+). It depends on Co(2+) as a cofactor.

It catalyses the reaction N-succinyl-(2S,6S)-2,6-diaminopimelate + H2O = (2S,6S)-2,6-diaminopimelate + succinate. The protein operates within amino-acid biosynthesis; L-lysine biosynthesis via DAP pathway; LL-2,6-diaminopimelate from (S)-tetrahydrodipicolinate (succinylase route): step 3/3. In terms of biological role, catalyzes the hydrolysis of N-succinyl-L,L-diaminopimelic acid (SDAP), forming succinate and LL-2,6-diaminopimelate (DAP), an intermediate involved in the bacterial biosynthesis of lysine and meso-diaminopimelic acid, an essential component of bacterial cell walls. The sequence is that of Succinyl-diaminopimelate desuccinylase from Shigella sonnei (strain Ss046).